Reading from the N-terminus, the 402-residue chain is Protein rds1 (402 aa).

Functionally, may have a function in stress-related responses of the cell. The polypeptide is Protein rds1 (rds1) (Schizosaccharomyces pombe (strain 972 / ATCC 24843) (Fission yeast)).